A 182-amino-acid chain; its full sequence is tRNA-splicing endonuclease (182 aa).

Active-site residues include Y119, H127, and K158.

Belongs to the tRNA-intron endonuclease family. Archaeal short subfamily. Homotetramer; although the tetramer contains four active sites, only two participate in the cleavage. Therefore, it should be considered as a dimer of dimers.

It carries out the reaction pretRNA = a 3'-half-tRNA molecule with a 5'-OH end + a 5'-half-tRNA molecule with a 2',3'-cyclic phosphate end + an intron with a 2',3'-cyclic phosphate and a 5'-hydroxyl terminus.. Endonuclease that removes tRNA introns. Cleaves pre-tRNA at the 5'- and 3'-splice sites to release the intron. The products are an intron and two tRNA half-molecules bearing 2',3' cyclic phosphate and 5'-OH termini. Recognizes a pseudosymmetric substrate in which 2 bulged loops of 3 bases are separated by a stem of 4 bp. The chain is tRNA-splicing endonuclease from Saccharolobus islandicus (strain L.S.2.15 / Lassen #1) (Sulfolobus islandicus).